The following is a 439-amino-acid chain: Omega-aminotransferase (439 aa).

Pyridoxal 5'-phosphate is bound at residue 112–113 (GS). N6-(pyridoxal phosphate)lysine is present on Lys-281. Thr-318 is a pyridoxal 5'-phosphate binding site.

The protein belongs to the class-III pyridoxal-phosphate-dependent aminotransferase family. As to quaternary structure, homotetramer. The cofactor is pyridoxal 5'-phosphate.

It carries out the reaction 3-oxopropanoate + L-alanine = beta-alanine + pyruvate. The catalysed reaction is 3-aminobutanoate + pyruvate = acetoacetate + L-alanine. It catalyses the reaction benzylamine + pyruvate = benzaldehyde + L-alanine. The enzyme catalyses (S)-1-phenylethylamine + pyruvate = acetophenone + L-alanine. It carries out the reaction 2-phenylethylamine + pyruvate = 2-phenylacetaldehyde + L-alanine. The catalysed reaction is 1-phenylpropylamine + pyruvate = 1-phenylpropan-1-one + L-alanine. It catalyses the reaction 3-phenylpropylamine + pyruvate = 3-phenylpropanal + L-alanine. In terms of biological role, aminotransferase that can use beta-amino acids, aliphatic amines, or aromatic amines as amino donors, and pyruvate as amino acceptor. Shows high activity for short-chain beta-amino acids, with the highest activity for 3-aminobutanoate and beta-alanine in vitro. Displays higher activity toward aromatic amines than aliphatic amines. May be involved in beta-alanine biosynthesis and/or degradation. This chain is Omega-aminotransferase, found in Caulobacter vibrioides (strain ATCC 19089 / CIP 103742 / CB 15) (Caulobacter crescentus).